Consider the following 228-residue polypeptide: Eukaryotic translation initiation factor 6 (228 aa).

Belongs to the eIF-6 family. In terms of assembly, monomer. Associates with the 60S ribosomal subunit.

Its subcellular location is the cytoplasm. It localises to the nucleus. It is found in the nucleolus. Functionally, binds to the 60S ribosomal subunit and prevents its association with the 40S ribosomal subunit to form the 80S initiation complex in the cytoplasm. May also be involved in ribosome biogenesis. The chain is Eukaryotic translation initiation factor 6 from Guillardia theta (Cryptophyte).